The following is a 168-amino-acid chain: Protein yop-1 (168 aa).

Residues 1 to 35 are Cytoplasmic-facing; sequence MSSPQDRAQQYIGQLDKELSKYPTLNNLEKTTGVP. Residues 36-55 form a helical membrane-spanning segment; sequence KAYAVIGLVALYFFLIIFNL. Residue Gly56 is a topological domain, lumenal. The helical transmembrane segment at 57–76 threads the bilayer; the sequence is GQLLTNLAGFVLPGYYSLNA. Over 77–86 the chain is Cytoplasmic; it reads LFTASKQDDT. Residues 87 to 103 traverse the membrane as a helical segment; that stretch reads QWLTYWVVFSLFTVIES. Residues 104 to 105 are Lumenal-facing; it reads LI. Residues 106 to 124 traverse the membrane as a helical segment; that stretch reads SVVYWFPFYFTFKFVFLLW. Topologically, residues 125-168 are cytoplasmic; that stretch reads LSLPTFKGAETIFRSFLAPTLGRYFQNGSTASGLRAKADAVHTD.

Belongs to the DP1 family. As to quaternary structure, oligomer.

The protein localises to the endoplasmic reticulum membrane. The protein resides in the golgi apparatus membrane. Its function is as follows. Required to generate and maintain the structure of the tubular endoplasmic reticulum network and the vacuole. Induces high curvature in membranes and causes membrane tubule formation. Involved in membrane/vesicle trafficking. This chain is Protein yop-1 (yop-1), found in Neurospora crassa (strain ATCC 24698 / 74-OR23-1A / CBS 708.71 / DSM 1257 / FGSC 987).